The chain runs to 147 residues: Hemoglobin subunit beta (147 aa).

The region spanning 3–147 (HWTAEEKQII…VAHALARKYH (145 aa)) is the Globin domain. Positions 64 and 93 each coordinate heme b.

As to quaternary structure, heterotetramer of two alpha (or alpha-D) and two beta chains. Red blood cells.

Its function is as follows. Involved in oxygen transport from the lung to the various peripheral tissues. The beta chain is a component of adult hemoglobin A and D. This chain is Hemoglobin subunit beta, found in Aythya fuligula (Tufted duck).